The sequence spans 247 residues: ATP synthase subunit a, chloroplastic (247 aa).

Helical transmembrane passes span 38–58 (QVLITSWVVIAILLGSVIIAV), 95–115 (VPFIGTMFLFIFVSNWSGALL), 133–153 (DINTTVALALPTSVAYFYAGL), 199–219 (LVVVVLVSLVPSVVPIPVMFL), and 220–240 (GLFTSGIQALIFATLAAAYIG).

It belongs to the ATPase A chain family. F-type ATPases have 2 components, CF(1) - the catalytic core - and CF(0) - the membrane proton channel. CF(1) has five subunits: alpha(3), beta(3), gamma(1), delta(1), epsilon(1). CF(0) has four main subunits: a, b, b' and c.

The protein resides in the plastid. It is found in the chloroplast thylakoid membrane. Functionally, key component of the proton channel; it plays a direct role in the translocation of protons across the membrane. This is ATP synthase subunit a, chloroplastic from Phalaenopsis aphrodite subsp. formosana (Moth orchid).